An 872-amino-acid polypeptide reads, in one-letter code: DNA mismatch repair protein MutS (872 aa).

Residue 622 to 629 (GPNMAGKS) coordinates ATP.

It belongs to the DNA mismatch repair MutS family.

Functionally, this protein is involved in the repair of mismatches in DNA. It is possible that it carries out the mismatch recognition step. This protein has a weak ATPase activity. In Geotalea uraniireducens (strain Rf4) (Geobacter uraniireducens), this protein is DNA mismatch repair protein MutS.